Reading from the N-terminus, the 98-residue chain is Large ribosomal subunit protein bL25 (98 aa).

The disordered stretch occupies residues 1-23 (MANFVLNAQARAEDKQGKGASRR).

The protein belongs to the bacterial ribosomal protein bL25 family. In terms of assembly, part of the 50S ribosomal subunit; part of the 5S rRNA/L5/L18/L25 subcomplex. Contacts the 5S rRNA. Binds to the 5S rRNA independently of L5 and L18.

Functionally, this is one of the proteins that binds to the 5S RNA in the ribosome where it forms part of the central protuberance. This is Large ribosomal subunit protein bL25 from Acinetobacter baumannii (strain AB307-0294).